A 475-amino-acid polypeptide reads, in one-letter code: Aspartyl/glutamyl-tRNA(Asn/Gln) amidotransferase subunit B (475 aa).

The protein belongs to the GatB/GatE family. GatB subfamily. In terms of assembly, heterotrimer of A, B and C subunits.

The catalysed reaction is L-glutamyl-tRNA(Gln) + L-glutamine + ATP + H2O = L-glutaminyl-tRNA(Gln) + L-glutamate + ADP + phosphate + H(+). The enzyme catalyses L-aspartyl-tRNA(Asn) + L-glutamine + ATP + H2O = L-asparaginyl-tRNA(Asn) + L-glutamate + ADP + phosphate + 2 H(+). Allows the formation of correctly charged Asn-tRNA(Asn) or Gln-tRNA(Gln) through the transamidation of misacylated Asp-tRNA(Asn) or Glu-tRNA(Gln) in organisms which lack either or both of asparaginyl-tRNA or glutaminyl-tRNA synthetases. The reaction takes place in the presence of glutamine and ATP through an activated phospho-Asp-tRNA(Asn) or phospho-Glu-tRNA(Gln). This is Aspartyl/glutamyl-tRNA(Asn/Gln) amidotransferase subunit B from Lysinibacillus sphaericus (strain C3-41).